We begin with the raw amino-acid sequence, 119 residues long: Large ribosomal subunit protein uL24 (119 aa).

This sequence belongs to the universal ribosomal protein uL24 family. Part of the 50S ribosomal subunit.

Functionally, one of two assembly initiator proteins, it binds directly to the 5'-end of the 23S rRNA, where it nucleates assembly of the 50S subunit. In terms of biological role, one of the proteins that surrounds the polypeptide exit tunnel on the outside of the subunit. In Clavibacter michiganensis subsp. michiganensis (strain NCPPB 382), this protein is Large ribosomal subunit protein uL24.